A 67-amino-acid polypeptide reads, in one-letter code: Protein SlyX homolog (67 aa).

This sequence belongs to the SlyX family.

The polypeptide is Protein SlyX homolog (Mesorhizobium japonicum (strain LMG 29417 / CECT 9101 / MAFF 303099) (Mesorhizobium loti (strain MAFF 303099))).